The chain runs to 298 residues: Ethanolamine ammonia-lyase small subunit (298 aa).

3 residues coordinate adenosylcob(III)alamin: Val210, Glu231, and Cys261.

It belongs to the EutC family. As to quaternary structure, the basic unit is a heterodimer which dimerizes to form tetramers. The heterotetramers trimerize; 6 large subunits form a core ring with 6 small subunits projecting outwards. Requires adenosylcob(III)alamin as cofactor.

It is found in the bacterial microcompartment. It carries out the reaction ethanolamine = acetaldehyde + NH4(+). The protein operates within amine and polyamine degradation; ethanolamine degradation. Catalyzes the deamination of various vicinal amino-alcohols to oxo compounds. Allows this organism to utilize ethanolamine as the sole source of nitrogen and carbon in the presence of external vitamin B12. This is Ethanolamine ammonia-lyase small subunit from Salmonella typhi.